Consider the following 308-residue polypeptide: Elongation factor Ts (308 aa).

The segment at 80 to 83 (TDFV) is involved in Mg(2+) ion dislocation from EF-Tu.

The protein belongs to the EF-Ts family.

It is found in the cytoplasm. Associates with the EF-Tu.GDP complex and induces the exchange of GDP to GTP. It remains bound to the aminoacyl-tRNA.EF-Tu.GTP complex up to the GTP hydrolysis stage on the ribosome. The sequence is that of Elongation factor Ts from Sphingopyxis alaskensis (strain DSM 13593 / LMG 18877 / RB2256) (Sphingomonas alaskensis).